A 224-amino-acid chain; its full sequence is Response regulator protein GraR (224 aa).

Residues 2–115 (QILLVEDDNT…VLIAKLQAIY (114 aa)) enclose the Response regulatory domain. Asp51 bears the 4-aspartylphosphate mark. Residues 126 to 224 (KRTLTWQDAV…KVGKGYMAHE (99 aa)) constitute a DNA-binding region (ompR/PhoB-type). Residues Thr128, Thr130, and Thr149 each carry the phosphothreonine modification.

Interacts with GraX. Post-translationally, phosphorylated by GraS. Phosphorylated by Stk1; phosphorylation increases the DNA-binding activity of GraR.

The protein resides in the cytoplasm. In terms of biological role, member of the two-component regulatory system GraR/GraS involved in resistance against cationic antimicrobial peptides (CAMPs). Upon phosphorylation by GraS, functions as a transcription regulator by direct binding to promoter regions of target genes such as adhesins, exoproteins, transporters, toxins, and proteins involved in cell wall synthesis. Down-regulates the expression of many genes involved in RNA and amino acid synthesis or glycolysis. This Staphylococcus aureus (strain USA300) protein is Response regulator protein GraR (graR).